A 422-amino-acid chain; its full sequence is 3-phosphoshikimate 1-carboxyvinyltransferase (422 aa).

Residues lysine 21, serine 22, and arginine 26 each coordinate 3-phosphoshikimate. Lysine 21 is a binding site for phosphoenolpyruvate. Phosphoenolpyruvate contacts are provided by glycine 93 and arginine 121. 6 residues coordinate 3-phosphoshikimate: serine 166, serine 167, glutamine 168, serine 194, aspartate 310, and lysine 337. Glutamine 168 contacts phosphoenolpyruvate. Aspartate 310 acts as the Proton acceptor in catalysis. Residues arginine 341, arginine 382, and lysine 407 each contribute to the phosphoenolpyruvate site.

It belongs to the EPSP synthase family. Monomer.

It localises to the cytoplasm. The catalysed reaction is 3-phosphoshikimate + phosphoenolpyruvate = 5-O-(1-carboxyvinyl)-3-phosphoshikimate + phosphate. The protein operates within metabolic intermediate biosynthesis; chorismate biosynthesis. Catalyzes the transfer of the enolpyruvyl moiety of phosphoenolpyruvate (PEP) to the 5-hydroxyl of shikimate-3-phosphate (S3P) to produce enolpyruvyl shikimate-3-phosphate and inorganic phosphate. The protein is 3-phosphoshikimate 1-carboxyvinyltransferase of Methanoculleus marisnigri (strain ATCC 35101 / DSM 1498 / JR1).